A 151-amino-acid polypeptide reads, in one-letter code: Deoxyuridine 5'-triphosphate nucleotidohydrolase (151 aa).

Substrate is bound by residues R69–G71, N82, L86–D88, and M96.

The protein belongs to the dUTPase family. Mg(2+) is required as a cofactor.

The catalysed reaction is dUTP + H2O = dUMP + diphosphate + H(+). It participates in pyrimidine metabolism; dUMP biosynthesis; dUMP from dCTP (dUTP route): step 2/2. In terms of biological role, this enzyme is involved in nucleotide metabolism: it produces dUMP, the immediate precursor of thymidine nucleotides and it decreases the intracellular concentration of dUTP so that uracil cannot be incorporated into DNA. The polypeptide is Deoxyuridine 5'-triphosphate nucleotidohydrolase (Blochmanniella floridana).